The primary structure comprises 265 residues: U6 snRNA phosphodiesterase 1 (265 aa).

Positions 1–67 (MSAAPLVGYS…EGPVDDSAKH (67 aa)) are disordered. A compositionally biased stretch (basic and acidic residues) spans 20–32 (AGARVRPGAEGRS). His-120 serves as the catalytic Proton acceptor. An AMP-binding site is contributed by 120–122 (HLS). UMP-binding positions include Gln-164, Tyr-202, and 206–210 (SFHIS). AMP-binding positions include Tyr-202 and 204–210 (DPSFHIS). His-208 functions as the Proton donor in the catalytic mechanism.

Belongs to the 2H phosphoesterase superfamily. USB1 family. Interacts with PLRG1, CDC5L and PRPF19.

Its subcellular location is the nucleus. The catalysed reaction is a 3'-end uridylyl-uridine-RNA = a 3'-end 2',3'-cyclophospho-uridine-RNA + uridine. The enzyme catalyses a 3'-end uridylyl-adenosine-RNA = a 3'-end 2',3'-cyclophospho-uridine-RNA + adenosine. Its function is as follows. 3'-5' RNA exonuclease that trims the 3' end of oligo(U) and oligo(A) tracts of the pre-U6 small nuclear RNA (snRNA) molecule, leading to the formation of a mature U6 snRNA 3' end-terminated with a 2',3'-cyclic phosphate. Participates in the U6 snRNA 3' end processing that prevents U6 snRNA degradation. In addition also removes uridines from the 3' end of U6atac snRNA and possibly the vault RNA VTRNA1-1. This chain is U6 snRNA phosphodiesterase 1, found in Bos taurus (Bovine).